We begin with the raw amino-acid sequence, 209 residues long: Uracil phosphoribosyltransferase (209 aa).

Residues Arg-79, Arg-104, and 131-139 each bind 5-phospho-alpha-D-ribose 1-diphosphate; that span reads DPMLATGNS. Residues Ile-194 and 199 to 201 each bind uracil; that span reads GDA. 5-phospho-alpha-D-ribose 1-diphosphate is bound at residue Asp-200.

This sequence belongs to the UPRTase family. Mg(2+) serves as cofactor.

The catalysed reaction is UMP + diphosphate = 5-phospho-alpha-D-ribose 1-diphosphate + uracil. The protein operates within pyrimidine metabolism; UMP biosynthesis via salvage pathway; UMP from uracil: step 1/1. Allosterically activated by GTP. Catalyzes the conversion of uracil and 5-phospho-alpha-D-ribose 1-diphosphate (PRPP) to UMP and diphosphate. This is Uracil phosphoribosyltransferase from Rhizobium meliloti (strain 1021) (Ensifer meliloti).